Consider the following 590-residue polypeptide: DNA mismatch repair protein MutL (590 aa).

Polar residues predominate over residues 335-351; it reads PLSSASPKLPESTTATA. The disordered stretch occupies residues 335-354; the sequence is PLSSASPKLPESTTATAQPH.

This sequence belongs to the DNA mismatch repair MutL/HexB family.

In terms of biological role, this protein is involved in the repair of mismatches in DNA. It is required for dam-dependent methyl-directed DNA mismatch repair. May act as a 'molecular matchmaker', a protein that promotes the formation of a stable complex between two or more DNA-binding proteins in an ATP-dependent manner without itself being part of a final effector complex. This Dichelobacter nodosus (strain VCS1703A) protein is DNA mismatch repair protein MutL.